The primary structure comprises 100 residues: Urease subunit gamma (100 aa).

It belongs to the urease gamma subunit family. Heterotrimer of UreA (gamma), UreB (beta) and UreC (alpha) subunits. Three heterotrimers associate to form the active enzyme.

Its subcellular location is the cytoplasm. The catalysed reaction is urea + 2 H2O + H(+) = hydrogencarbonate + 2 NH4(+). It functions in the pathway nitrogen metabolism; urea degradation; CO(2) and NH(3) from urea (urease route): step 1/1. This Enterobacter sp. (strain 638) protein is Urease subunit gamma.